The following is a 382-amino-acid chain: Homoserine O-acetyltransferase (382 aa).

Positions 1-20 (MSTDQSPCPSATGAELLPPP) are disordered. One can recognise an AB hydrolase-1 domain in the interval 59–363 (NVVLVEHALT…RDGHDGFLTE (305 aa)). The active-site Nucleophile is the Ser164. Substrate is bound at residue Arg234. Active-site residues include Asp327 and His357. Asp358 serves as a coordination point for substrate.

Belongs to the AB hydrolase superfamily. MetX family. In terms of assembly, homodimer.

The protein resides in the cytoplasm. The catalysed reaction is L-homoserine + acetyl-CoA = O-acetyl-L-homoserine + CoA. It functions in the pathway amino-acid biosynthesis; L-methionine biosynthesis via de novo pathway; O-acetyl-L-homoserine from L-homoserine: step 1/1. Its function is as follows. Transfers an acetyl group from acetyl-CoA to L-homoserine, forming acetyl-L-homoserine. This is Homoserine O-acetyltransferase from Nocardia farcinica (strain IFM 10152).